Reading from the N-terminus, the 395-residue chain is ATP phosphoribosyltransferase regulatory subunit (395 aa).

This sequence belongs to the class-II aminoacyl-tRNA synthetase family. HisZ subfamily. In terms of assembly, heteromultimer composed of HisG and HisZ subunits.

It localises to the cytoplasm. It functions in the pathway amino-acid biosynthesis; L-histidine biosynthesis; L-histidine from 5-phospho-alpha-D-ribose 1-diphosphate: step 1/9. Required for the first step of histidine biosynthesis. May allow the feedback regulation of ATP phosphoribosyltransferase activity by histidine. The polypeptide is ATP phosphoribosyltransferase regulatory subunit (Azotobacter vinelandii (strain DJ / ATCC BAA-1303)).